The primary structure comprises 233 residues: 5'-methylthioadenosine/S-adenosylhomocysteine nucleosidase (233 aa).

The Proton acceptor role is filled by Glu12. Residues Gly78, Ile156, and 177–178 (ME) each bind substrate. Asp201 (proton donor) is an active-site residue.

The protein belongs to the PNP/UDP phosphorylase family. MtnN subfamily.

It catalyses the reaction S-adenosyl-L-homocysteine + H2O = S-(5-deoxy-D-ribos-5-yl)-L-homocysteine + adenine. The catalysed reaction is S-methyl-5'-thioadenosine + H2O = 5-(methylsulfanyl)-D-ribose + adenine. It carries out the reaction 5'-deoxyadenosine + H2O = 5-deoxy-D-ribose + adenine. The protein operates within amino-acid biosynthesis; L-methionine biosynthesis via salvage pathway; S-methyl-5-thio-alpha-D-ribose 1-phosphate from S-methyl-5'-thioadenosine (hydrolase route): step 1/2. Its function is as follows. Catalyzes the irreversible cleavage of the glycosidic bond in both 5'-methylthioadenosine (MTA) and S-adenosylhomocysteine (SAH/AdoHcy) to adenine and the corresponding thioribose, 5'-methylthioribose and S-ribosylhomocysteine, respectively. Also cleaves 5'-deoxyadenosine, a toxic by-product of radical S-adenosylmethionine (SAM) enzymes, into 5-deoxyribose and adenine. The polypeptide is 5'-methylthioadenosine/S-adenosylhomocysteine nucleosidase (Listeria monocytogenes serovar 1/2a (strain ATCC BAA-679 / EGD-e)).